Reading from the N-terminus, the 165-residue chain is Choriogonadotropin subunit beta 3 (165 aa).

A signal peptide spans 1 to 20 (MEMFQGLLLLLLLSMGGTWA). Disulfide bonds link Cys-29–Cys-77, Cys-43–Cys-92, Cys-46–Cys-130, Cys-54–Cys-108, Cys-58–Cys-110, and Cys-113–Cys-120. Asn-33 and Asn-50 each carry an N-linked (GlcNAc...) asparagine glycan. The segment at 131–165 (DDPRFQDSSSSKAPPPSLPSPSRLPGPSDTPILPQ) is disordered. Ser-141, Ser-147, Ser-152, and Ser-158 each carry an O-linked (GalNAc...) serine glycan. Residues 143–154 (APPPSLPSPSRL) show a composition bias toward pro residues.

The protein belongs to the glycoprotein hormones subunit beta family. Heterodimer of a common alpha chain identical in LH, FSH, TSH and HCG and a unique beta chain distinct in each of the hormones. High expression in the placenta throughout pregnancy.

It is found in the secreted. Its function is as follows. Beta subunit of the human chorionic gonadotropin (hCG). hCG is a complex glycoprotein composed of two glycosylated subunits alpha and beta which are non-covalently associated. The alpha subunit is identical to those in the pituitary gonadotropin hormones (LH, FSH and TSH). The beta subunits are distinct in each of the hormones and confer receptor and biological specificity. Has an essential role in pregnancy and maternal adaptation. Stimulates the ovaries to synthesize the steroids that are essential for the maintenance of pregnancy. This chain is Choriogonadotropin subunit beta 3 (CGB3), found in Homo sapiens (Human).